A 269-amino-acid chain; its full sequence is Uncharacterised methyltransferase MT1546 (269 aa).

It belongs to the methyltransferase superfamily.

This is Uncharacterised methyltransferase MT1546 from Mycobacterium tuberculosis (strain CDC 1551 / Oshkosh).